The following is a 133-amino-acid chain: Salmonella pathogenicity island 2 protein C (133 aa).

In terms of assembly, interacts with the mammalian NIPSNAP3A and HOOK3 proteins in infected cells.

The protein resides in the secreted. The protein localises to the cytoplasm. In terms of biological role, virulence protein that plays a central role in mammalian macrophage infection, by inhibiting phagosome-lysosome fusion and cellular trafficking, including trafficking of organelles that are devoid of Salmonella. May act by disrupting the function of the mammalian HOOK3 protein, a protein involved in the cellular traffic. Also required for actin ADP-ribosylase SpvB activity. This chain is Salmonella pathogenicity island 2 protein C (spiC), found in Salmonella typhimurium (strain 14028s / SGSC 2262).